A 318-amino-acid polypeptide reads, in one-letter code: ADP-ribosyl cyclase/cyclic ADP-ribose hydrolase 2 (318 aa).

Positions 1 to 32 (MAAQGCAASRLLQLLLQLLLLLLLLAAGGARA) are cleaved as a signal peptide. Cystine bridges form between Cys51/Cys67, Cys83/Cys163, and Cys144/Cys157. Residues Asn66 and Asn95 are each glycosylated (N-linked (GlcNAc...) asparagine). Position 109 (Trp109) interacts with NAD(+). Trp109 is a binding site for nicotinamide. Asn148 carries N-linked (GlcNAc...) asparagine glycosylation. Trp172 is a binding site for NAD(+). Residue Asn192 is glycosylated (N-linked (GlcNAc...) asparagine). Glu210 is a binding site for NAD(+). 2 disulfides stabilise this stretch: Cys238–Cys259 and Cys271–Cys280. Ala293 is lipidated: GPI-anchor amidated alanine. Positions 294 to 318 (PSLYTEQRAGLIIPLFLVLASRTQL) are cleaved as a propeptide — removed in mature form.

This sequence belongs to the ADP-ribosyl cyclase family. In terms of assembly, homodimer. As to expression, expressed in various tissues including placenta, lung, liver and kidney.

It is found in the cell membrane. It catalyses the reaction NAD(+) + H2O = ADP-D-ribose + nicotinamide + H(+). The enzyme catalyses NAD(+) = cyclic ADP-beta-D-ribose + nicotinamide + H(+). It carries out the reaction cyclic ADP-beta-D-ribose + H2O = ADP-D-ribose. Its activity is regulated as follows. ADP-ribosyl cyclase and cADPR hydrolase activities are both activated by Zn(2+) or Mn(2+), and inhibited by Cu(2+), while Mg(2+) and Ca(2+) do not have any significant influence. Its function is as follows. Catalyzes both the synthesis of cyclic ADP-beta-D-ribose (cADPR) from NAD(+), and its hydrolysis to ADP-D-ribose (ADPR). Cyclic ADPR is known to serve as an endogenous second messenger that elicits calcium release from intracellular stores, and thus regulates the mobilization of intracellular calcium. May be involved in pre-B-cell growth. The polypeptide is ADP-ribosyl cyclase/cyclic ADP-ribose hydrolase 2 (BST1) (Homo sapiens (Human)).